A 672-amino-acid chain; its full sequence is Beta-galactosidase bgaB (672 aa).

Residue Arg-109 coordinates substrate. Cys-113 is a binding site for Zn(2+). Asn-147 lines the substrate pocket. The active-site Proton donor is Glu-148. Zn(2+)-binding residues include Cys-156, Cys-158, and Cys-161. Glu-303 (nucleophile) is an active-site residue. Residues Trp-311 and Glu-351–His-354 contribute to the substrate site.

Belongs to the glycosyl hydrolase 42 family.

The enzyme catalyses Hydrolysis of terminal non-reducing beta-D-galactose residues in beta-D-galactosides.. Its activity is regulated as follows. By divalent metal ions. Fe(2+), Zn(2+), Cu(2+), Pb(2+) and Sn(2+) inhibit 52, 76.6, 85.3, 100 and 100% of the enzyme activity, respectively. Other metal cations and EDTA do not inhibit this enzyme. Thiol reagents 2-mercaptoethanol and dithiothreitol have no effect on the activity. Sulfhydryl group-blocking reagents p-chloromercuribenzoic acid and iodoacetic acid inhibit 86.2 and 74% of the enzyme activity, respectively. Functionally, hydrolyzes 6-bromo-2-naphthyl-beta-D-galactopyranoside and o-nitrophenyl-beta-D-galactopyranoside (ONPG). Possesses a high level of transgalactosylation activity. Hydrolyzes lactose in milk. The chain is Beta-galactosidase bgaB (bgaB) from Geobacillus kaustophilus.